The sequence spans 134 residues: Small ribosomal subunit protein uS12 (134 aa).

The segment at 1–30 is disordered; the sequence is MPTINQLVKHGREKVKEKSKSPALQGHPQK. Asp-89 bears the 3-methylthioaspartic acid mark. Positions 106-134 are disordered; the sequence is GVENRRQSRSKYGAKRPKAGAAAGAKGKK. A compositionally biased stretch (basic residues) spans 112-123; the sequence is QSRSKYGAKRPK. Low complexity predominate over residues 124 to 134; the sequence is AGAAAGAKGKK.

Belongs to the universal ribosomal protein uS12 family. Part of the 30S ribosomal subunit. Contacts proteins S8 and S17. May interact with IF1 in the 30S initiation complex.

Its function is as follows. With S4 and S5 plays an important role in translational accuracy. In terms of biological role, interacts with and stabilizes bases of the 16S rRNA that are involved in tRNA selection in the A site and with the mRNA backbone. Located at the interface of the 30S and 50S subunits, it traverses the body of the 30S subunit contacting proteins on the other side and probably holding the rRNA structure together. The combined cluster of proteins S8, S12 and S17 appears to hold together the shoulder and platform of the 30S subunit. The chain is Small ribosomal subunit protein uS12 from Fervidobacterium nodosum (strain ATCC 35602 / DSM 5306 / Rt17-B1).